Reading from the N-terminus, the 348-residue chain is NADH-ubiquinone oxidoreductase chain 2 (348 aa).

The next 9 helical transmembrane spans lie at 3 to 23 (PYVL…TFAS), 60 to 80 (FLTQ…NAWM), 96 to 116 (TMFM…FWMP), 149 to 169 (IDPL…GWGG), 178 to 197 (ILAY…IQYA), 202 to 219 (LLAL…FLTL), 246 to 266 (LVLL…KWLI), 274 to 294 (DLPI…YFYL), and 326 to 346 (LALF…ILTL).

This sequence belongs to the complex I subunit 2 family.

The protein localises to the mitochondrion inner membrane. The enzyme catalyses a ubiquinone + NADH + 5 H(+)(in) = a ubiquinol + NAD(+) + 4 H(+)(out). In terms of biological role, core subunit of the mitochondrial membrane respiratory chain NADH dehydrogenase (Complex I) that is believed to belong to the minimal assembly required for catalysis. Complex I functions in the transfer of electrons from NADH to the respiratory chain. The immediate electron acceptor for the enzyme is believed to be ubiquinone. The sequence is that of NADH-ubiquinone oxidoreductase chain 2 (MT-ND2) from Carassius auratus (Goldfish).